The primary structure comprises 116 residues: NADH-ubiquinone oxidoreductase chain 3 (116 aa).

The next 3 membrane-spanning stretches (helical) occupy residues 4-24 (LIIT…IAFW), 56-76 (FFLI…LLPL), and 88-108 (TLIL…YEWI).

This sequence belongs to the complex I subunit 3 family. In terms of assembly, core subunit of respiratory chain NADH dehydrogenase (Complex I) which is composed of 45 different subunits. Interacts with TMEM186. Interacts with TMEM242.

The protein resides in the mitochondrion inner membrane. The catalysed reaction is a ubiquinone + NADH + 5 H(+)(in) = a ubiquinol + NAD(+) + 4 H(+)(out). Core subunit of the mitochondrial membrane respiratory chain NADH dehydrogenase (Complex I) which catalyzes electron transfer from NADH through the respiratory chain, using ubiquinone as an electron acceptor. Essential for the catalytic activity of complex I. The sequence is that of NADH-ubiquinone oxidoreductase chain 3 from Osphranter robustus (Wallaroo).